We begin with the raw amino-acid sequence, 590 residues long: Multidrug resistance ABC transporter ATP-binding and permease protein (590 aa).

Helical transmembrane passes span 35–55 (YLFFIIGILAGIVGTLIQLQV), 79–99 (IALYIGSAAVSAIAAIVLGIF), 150–170 (IPQAFTSILLLVGSIVFMLQM), 176–196 (LAMIIAVPVVMLIMFPIMTFG), 261–281 (VMMLSMMLMIFGLLAYGIYLI), and 292–312 (LGMMMYLMNLIGAVPTVATFF). Positions 38–317 (FIIGILAGIV…VATFFTELAK (280 aa)) constitute an ABC transmembrane type-1 domain. One can recognise an ABC transporter domain in the interval 349–584 (LSARHVDFAY…HPLYAKYVSE (236 aa)). 382–389 (GPSGGGKS) contributes to the ATP binding site.

It belongs to the ABC transporter superfamily. Multidrug exporter LmrA (TC 3.A.1.117.1) family. As to quaternary structure, homodimer.

It is found in the cell membrane. It catalyses the reaction ATP + H2O + xenobioticSide 1 = ADP + phosphate + xenobioticSide 2.. Efflux transporter for a variety of amphiphilic cationic compounds, including antibiotics. The protein is Multidrug resistance ABC transporter ATP-binding and permease protein (lmrA) of Lactococcus lactis subsp. lactis (strain IL1403) (Streptococcus lactis).